A 78-amino-acid polypeptide reads, in one-letter code: Omega-conotoxin-like Ac6.5 (78 aa).

An N-terminal signal peptide occupies residues 1 to 22; it reads MKLTCVVIVAVLLLTACQLLTA. Residues 23-42 constitute a propeptide that is removed on maturation; it reads DDSRGTQKHRSLRSTTKVSK. Cystine bridges form between C46/C62, C53/C65, and C61/C72. P55 and P67 each carry 4-hydroxyproline.

Belongs to the conotoxin O1 superfamily. As to expression, expressed by the venom duct.

The protein resides in the secreted. In terms of biological role, omega-conotoxins act at presynaptic membranes, they bind and block voltage-gated calcium channels (Cav). This is Omega-conotoxin-like Ac6.5 from Conus achatinus (Little frog cone).